Consider the following 338-residue polypeptide: Pyridoxal 5'-phosphate synthase subunit PdxS (338 aa).

Asp66 is a D-ribose 5-phosphate binding site. Lys123 acts as the Schiff-base intermediate with D-ribose 5-phosphate in catalysis. Gly195 provides a ligand contact to D-ribose 5-phosphate. Lys207 contacts D-glyceraldehyde 3-phosphate. D-ribose 5-phosphate contacts are provided by residues Gly256 and 277-278 (GS).

It belongs to the PdxS/SNZ family. In the presence of PdxT, forms a dodecamer of heterodimers.

The enzyme catalyses aldehydo-D-ribose 5-phosphate + D-glyceraldehyde 3-phosphate + L-glutamine = pyridoxal 5'-phosphate + L-glutamate + phosphate + 3 H2O + H(+). The protein operates within cofactor biosynthesis; pyridoxal 5'-phosphate biosynthesis. In terms of biological role, catalyzes the formation of pyridoxal 5'-phosphate from ribose 5-phosphate (RBP), glyceraldehyde 3-phosphate (G3P) and ammonia. The ammonia is provided by the PdxT subunit. Can also use ribulose 5-phosphate and dihydroxyacetone phosphate as substrates, resulting from enzyme-catalyzed isomerization of RBP and G3P, respectively. This Saccharolobus islandicus (strain Y.N.15.51 / Yellowstone #2) (Sulfolobus islandicus) protein is Pyridoxal 5'-phosphate synthase subunit PdxS.